A 163-amino-acid chain; its full sequence is Staphylokinase (163 aa).

A signal peptide spans 1–27 (MLKRSLLFLTVLLLLFSFSSITNEVSA).

This sequence belongs to the staphylokinase family.

The protein resides in the secreted. In terms of biological role, potent plasminogen activator that converts plasminogen into plasmin. It forms a 1:1 complex with plasmin, which in turn activates other plasminogen molecules. The chain is Staphylokinase (sak) from Staphylococcus phage phi13 (Bacteriophage phi-13).